Here is a 235-residue protein sequence, read N- to C-terminus: LexA repressor (235 aa).

Positions 26-46 (FDEMKEALDLASKSGIHRLIT) form a DNA-binding region, H-T-H motif. Residues 72–104 (QATTAAPPKGRGAFRPQVLEGGGQAPTTSAQPQ) are disordered. Residues serine 156 and lysine 193 each act as for autocatalytic cleavage activity in the active site.

Belongs to the peptidase S24 family. Homodimer.

The catalysed reaction is Hydrolysis of Ala-|-Gly bond in repressor LexA.. Its function is as follows. Represses a number of genes involved in the response to DNA damage (SOS response), including recA and lexA. In the presence of single-stranded DNA, RecA interacts with LexA causing an autocatalytic cleavage which disrupts the DNA-binding part of LexA, leading to derepression of the SOS regulon and eventually DNA repair. The polypeptide is LexA repressor (Caulobacter sp. (strain K31)).